Reading from the N-terminus, the 257-residue chain is MPARRPFIGGNFKCNGSLDFIKSHVAAIAAHKIPDSVDVVIAPSAVHLSTAIAANTSKQLRIAAQNVYLEGNGAWTGETSVEMLQDMGLKHVIVGHSERRRIMGETDEQSAKKAKRALEKGMTVIFCVGETLDERKANRTMEVNIAQLEALGKELGESKMLWKEVVIAYEPVWSIGTGVVATPEQAEEVHVGLRKWFAEKVCAEGAQHIRIIYGGSANGSNCEKLGQCPNIDGFLVGGASLKPEFMTMIDILTKTRT.

The substrate site is built by N11 and K13. H96 serves as the catalytic Electrophile. Catalysis depends on E170, which acts as the Proton acceptor.

The protein belongs to the triosephosphate isomerase family. As to quaternary structure, homodimer.

Its subcellular location is the cytoplasm. It carries out the reaction D-glyceraldehyde 3-phosphate = dihydroxyacetone phosphate. The enzyme catalyses dihydroxyacetone phosphate = methylglyoxal + phosphate. Its pathway is carbohydrate biosynthesis; gluconeogenesis. The protein operates within carbohydrate degradation; glycolysis; D-glyceraldehyde 3-phosphate from glycerone phosphate: step 1/1. In terms of biological role, triosephosphate isomerase is an extremely efficient metabolic enzyme that catalyzes the interconversion between dihydroxyacetone phosphate (DHAP) and D-glyceraldehyde-3-phosphate (G3P) in glycolysis and gluconeogenesis. Functionally, it is also responsible for the non-negligible production of methylglyoxal a reactive cytotoxic side-product that modifies and can alter proteins, DNA and lipids. The chain is Triosephosphate isomerase from Giardia intestinalis (Giardia lamblia).